The chain runs to 215 residues: 3-demethoxyubiquinol 3-hydroxylase (215 aa).

The tract at residues 26–47 (PSSAHSQRPSPAVVQPEHKMSE) is disordered. Positions 64, 94, 97, 146, 178, and 181 each coordinate Fe cation.

Belongs to the COQ7 family. Fe cation serves as cofactor.

The protein localises to the cell membrane. The catalysed reaction is a 5-methoxy-2-methyl-3-(all-trans-polyprenyl)benzene-1,4-diol + AH2 + O2 = a 3-demethylubiquinol + A + H2O. It participates in cofactor biosynthesis; ubiquinone biosynthesis. In terms of biological role, catalyzes the hydroxylation of 2-nonaprenyl-3-methyl-6-methoxy-1,4-benzoquinol during ubiquinone biosynthesis. The protein is 3-demethoxyubiquinol 3-hydroxylase of Pseudomonas syringae pv. syringae (strain B728a).